Reading from the N-terminus, the 353-residue chain is Polyadenylate-binding protein-interacting protein 10 (353 aa).

The segment at 1–61 (MAVAENAGVK…IDSTPETDDR (61 aa)) is disordered. Positions 20 to 31 (NNNTAASATETT) are enriched in low complexity. A PAM2-like motif is present at residues 96 to 106 (KLNPMAQEFVP). The segment at 128–159 (AAPPKLADGNDHFPRRRRSFGQGKRRMNKRTS) is disordered. Over residues 141-156 (PRRRRSFGQGKRRMNK) the composition is skewed to basic residues. A Bipartite nuclear localization signal motif is present at residues 142-153 (RRRRSFGQGKRR). RRM domains lie at 169-244 (RTVY…PSKT) and 266-341 (RTVY…PSKT).

Expressed in cauline leaves, stems, rosette leaves, immature siliques and primary inflorescences.

The protein localises to the nucleus. This is Polyadenylate-binding protein-interacting protein 10 (CID10) from Arabidopsis thaliana (Mouse-ear cress).